Consider the following 205-residue polypeptide: Glycerol-3-phosphate acyltransferase (205 aa).

6 helical membrane passes run 5-25 (LALG…GYLA), 54-74 (GPAA…VWLA), 87-107 (IVLG…WLAF), 117-137 (VGLL…VWGV), 138-158 (CFAV…ATPL), and 162-182 (LWRA…YIVW).

This sequence belongs to the PlsY family. As to quaternary structure, probably interacts with PlsX.

The protein localises to the cell inner membrane. It catalyses the reaction an acyl phosphate + sn-glycerol 3-phosphate = a 1-acyl-sn-glycero-3-phosphate + phosphate. It functions in the pathway lipid metabolism; phospholipid metabolism. In terms of biological role, catalyzes the transfer of an acyl group from acyl-phosphate (acyl-PO(4)) to glycerol-3-phosphate (G3P) to form lysophosphatidic acid (LPA). This enzyme utilizes acyl-phosphate as fatty acyl donor, but not acyl-CoA or acyl-ACP. The sequence is that of Glycerol-3-phosphate acyltransferase from Gloeobacter violaceus (strain ATCC 29082 / PCC 7421).